The primary structure comprises 120 residues: Large ribosomal subunit protein bL20 (120 aa).

This sequence belongs to the bacterial ribosomal protein bL20 family.

Binds directly to 23S ribosomal RNA and is necessary for the in vitro assembly process of the 50S ribosomal subunit. It is not involved in the protein synthesizing functions of that subunit. This is Large ribosomal subunit protein bL20 from Novosphingobium aromaticivorans (strain ATCC 700278 / DSM 12444 / CCUG 56034 / CIP 105152 / NBRC 16084 / F199).